Here is a 501-residue protein sequence, read N- to C-terminus: Probable malate:quinone oxidoreductase (501 aa).

It belongs to the MQO family. Requires FAD as cofactor.

It catalyses the reaction (S)-malate + a quinone = a quinol + oxaloacetate. Its pathway is carbohydrate metabolism; tricarboxylic acid cycle; oxaloacetate from (S)-malate (quinone route): step 1/1. This chain is Probable malate:quinone oxidoreductase, found in Geobacillus kaustophilus (strain HTA426).